Reading from the N-terminus, the 280-residue chain is 23S rRNA (guanine(748)-N(1))-methyltransferase (280 aa).

The Zn(2+) site is built by cysteine 11, cysteine 14, cysteine 27, and histidine 31. S-adenosyl-L-methionine contacts are provided by residues tyrosine 70, 100-101, and histidine 188; that span reads TG.

It belongs to the methyltransferase superfamily. RlmA family.

It carries out the reaction guanosine(748) in 23S rRNA + S-adenosyl-L-methionine = N(1)-methylguanosine(748) in 23S rRNA + S-adenosyl-L-homocysteine + H(+). Functionally, specifically methylates the guanosine in position 748 of 23S rRNA. Confers resistance to the macrolide antibiotic tylosine. This Streptomyces fradiae (Streptomyces roseoflavus) protein is 23S rRNA (guanine(748)-N(1))-methyltransferase (rlmAII).